A 129-amino-acid chain; its full sequence is Transcriptional regulator WhiB2 (129 aa).

The tract at residues 23-45 is disordered; it reads SHAPHIDTGSTPTGAAGRPQLSL. Residues 66–123 enclose the 4Fe-4S Wbl-type domain; the sequence is LCAQTDPEAFFPEKGGSTREAKRICQGCEVRDACLEYALAHDERFGIWGGLSERERRR. Positions 67, 90, 93, and 99 each coordinate [4Fe-4S] cluster.

It belongs to the WhiB family. It depends on [4Fe-4S] cluster as a cofactor. Post-translationally, the Fe-S cluster can be nitrosylated by nitric oxide (NO). Upon Fe-S cluster removal intramolecular disulfide bonds are formed.

The protein localises to the cytoplasm. In terms of biological role, acts as a transcriptional regulator. Probably redox-responsive. The apo- but not holo-form probably binds DNA. The protein is Transcriptional regulator WhiB2 (whiB2) of Mycolicibacterium smegmatis (strain ATCC 700084 / mc(2)155) (Mycobacterium smegmatis).